The primary structure comprises 1215 residues: Pesticidal crystal protein Cry1Ka (1215 aa).

It belongs to the delta endotoxin family.

Promotes colloidosmotic lysis by binding to the midgut epithelial cells of insects. Selectively toxic to Artogeia rapae but not active on Plutella xylostella. This Bacillus thuringiensis subsp. morrisoni protein is Pesticidal crystal protein Cry1Ka (cry1Ka).